The sequence spans 220 residues: Fructose-6-phosphate aldolase (220 aa).

Lys85 serves as the catalytic Schiff-base intermediate with substrate.

This sequence belongs to the transaldolase family. Type 3A subfamily. As to quaternary structure, homodecamer.

It is found in the cytoplasm. It carries out the reaction beta-D-fructose 6-phosphate = dihydroxyacetone + D-glyceraldehyde 3-phosphate. Its function is as follows. Catalyzes the reversible formation of fructose 6-phosphate from dihydroxyacetone and D-glyceraldehyde 3-phosphate via an aldolization reaction. The chain is Fructose-6-phosphate aldolase from Enterobacter sp. (strain 638).